The chain runs to 1177 residues: DNA-directed RNA polymerase subunit beta (1177 aa).

The segment at 1–36 is disordered; the sequence is MEGCILADSRQSKTAASPSPSRPQSSSNNSVPGAPN. Over residues 17 to 32 the composition is skewed to low complexity; the sequence is SPSPSRPQSSSNNSVP.

Belongs to the RNA polymerase beta chain family. In terms of assembly, the RNAP catalytic core consists of 2 alpha, 1 beta, 1 beta' and 1 omega subunit. When a sigma factor is associated with the core the holoenzyme is formed, which can initiate transcription.

It catalyses the reaction RNA(n) + a ribonucleoside 5'-triphosphate = RNA(n+1) + diphosphate. Functionally, DNA-dependent RNA polymerase catalyzes the transcription of DNA into RNA using the four ribonucleoside triphosphates as substrates. This Mycobacterium tuberculosis (strain ATCC 25177 / H37Ra) protein is DNA-directed RNA polymerase subunit beta.